We begin with the raw amino-acid sequence, 296 residues long: GTPase Era (296 aa).

An Era-type G domain is found at 3–170 (KSGFVTIVGR…KELMFKYIPE (168 aa)). Residues 11-18 (GRPNVGKS) form a G1 region. 11 to 18 (GRPNVGKS) is a GTP binding site. A G2 region spans residues 37–41 (QTTRN). The interval 58-61 (DTPG) is G3. GTP contacts are provided by residues 58-62 (DTPGI) and 120-123 (NKID). The interval 120-123 (NKID) is G4. The G5 stretch occupies residues 149-151 (ISA). Residues 201-278 (LSEEVPHGIA…YIRLWVKVKE (78 aa)) enclose the KH type-2 domain.

The protein belongs to the TRAFAC class TrmE-Era-EngA-EngB-Septin-like GTPase superfamily. Era GTPase family. As to quaternary structure, monomer.

It localises to the cytoplasm. The protein resides in the cell membrane. An essential GTPase that binds both GDP and GTP, with rapid nucleotide exchange. Plays a role in 16S rRNA processing and 30S ribosomal subunit biogenesis and possibly also in cell cycle regulation and energy metabolism. The protein is GTPase Era of Clostridium botulinum (strain Okra / Type B1).